The chain runs to 362 residues: MGSSFGDLFRISTFGESHGGGVGVIVEGCPPRLELDLQKIQAELDRRKPGQSKISTPRKEEDQVEILSGLLNNTTLGTPIAMVVRNKDHKPGDYKEMNVAFRPSHADATYQAKYGIQARSGGGRASARETIARVAAGAIAKQLLTKAHNTEVLAWVKRIHTLEAEINAQDVSIDDVEANIVRCPNQVMAAQMVERIEAISREGDSCGGVIECVVRNAPMGLGMPVFDKLEADLAKAVMSLPASKGFEIGSGFGGTLLKGSEHNDAFLPSNDGRLRTATNNSGGIQGGITNGESIVIRVAFKPTATIRKDQQTIDADGNTTTLSAKGRHDPCVLPRAVPIVEAMVSLVLADHLLRQQGQCSLW.

Residue arginine 47 coordinates NADP(+). Residues 124–126 (RAS), glycine 286, 301–305 (KPTAT), and arginine 327 each bind FMN.

The protein belongs to the chorismate synthase family. Homotetramer. FMNH2 is required as a cofactor.

The enzyme catalyses 5-O-(1-carboxyvinyl)-3-phosphoshikimate = chorismate + phosphate. It functions in the pathway metabolic intermediate biosynthesis; chorismate biosynthesis; chorismate from D-erythrose 4-phosphate and phosphoenolpyruvate: step 7/7. In terms of biological role, catalyzes the anti-1,4-elimination of the C-3 phosphate and the C-6 proR hydrogen from 5-enolpyruvylshikimate-3-phosphate (EPSP) to yield chorismate, which is the branch point compound that serves as the starting substrate for the three terminal pathways of aromatic amino acid biosynthesis. This reaction introduces a second double bond into the aromatic ring system. The protein is Chorismate synthase of Prochlorococcus marinus (strain MIT 9303).